The following is a 313-amino-acid chain: Aspartate carbamoyltransferase catalytic subunit (313 aa).

Residues arginine 66 and threonine 67 each contribute to the carbamoyl phosphate site. Lysine 94 lines the L-aspartate pocket. Carbamoyl phosphate contacts are provided by arginine 116, histidine 144, and glutamine 147. Residues arginine 177 and arginine 231 each coordinate L-aspartate. Carbamoyl phosphate is bound by residues glycine 272 and proline 273.

The protein belongs to the aspartate/ornithine carbamoyltransferase superfamily. ATCase family. In terms of assembly, heterododecamer (2C3:3R2) of six catalytic PyrB chains organized as two trimers (C3), and six regulatory PyrI chains organized as three dimers (R2).

It carries out the reaction carbamoyl phosphate + L-aspartate = N-carbamoyl-L-aspartate + phosphate + H(+). The protein operates within pyrimidine metabolism; UMP biosynthesis via de novo pathway; (S)-dihydroorotate from bicarbonate: step 2/3. Functionally, catalyzes the condensation of carbamoyl phosphate and aspartate to form carbamoyl aspartate and inorganic phosphate, the committed step in the de novo pyrimidine nucleotide biosynthesis pathway. This Pelagibacter ubique (strain HTCC1062) protein is Aspartate carbamoyltransferase catalytic subunit.